A 69-amino-acid chain; its full sequence is DNA gyrase inhibitor YacG (69 aa).

The Zn(2+) site is built by Cys7, Cys10, Cys26, and Cys30.

This sequence belongs to the DNA gyrase inhibitor YacG family. As to quaternary structure, interacts with GyrB. The cofactor is Zn(2+).

Its function is as follows. Inhibits all the catalytic activities of DNA gyrase by preventing its interaction with DNA. Acts by binding directly to the C-terminal domain of GyrB, which probably disrupts DNA binding by the gyrase. This is DNA gyrase inhibitor YacG from Shewanella putrefaciens (strain CN-32 / ATCC BAA-453).